A 188-amino-acid chain; its full sequence is Cell division protein SepF (188 aa).

The protein belongs to the SepF family. In terms of assembly, homodimer. Interacts with FtsZ.

It localises to the cytoplasm. Functionally, cell division protein that is part of the divisome complex and is recruited early to the Z-ring. Probably stimulates Z-ring formation, perhaps through the cross-linking of FtsZ protofilaments. Its function overlaps with FtsA. The protein is Cell division protein SepF of Synechococcus sp. (strain CC9605).